The primary structure comprises 132 residues: Replication enhancer protein (132 aa).

Belongs to the geminiviridae replication enhancer protein family. In terms of assembly, homooligomer. Interacts with the replication-associated protein (REP). Interacts with host proliferating cell nuclear antigen (PCNA). Interacts with host retinoblastoma-related protein 1 (RBR1), and may thereby deregulate the host cell cycle. Oligomerization and interaction with PCNA are necessary for optimal replication enhancement.

In terms of biological role, increases viral DNA accumulation. Enhances infectivity and symptom expression. The sequence is that of Replication enhancer protein from Potato yellow mosaic virus (isolate Venezuela) (PYMV).